Here is a 635-residue protein sequence, read N- to C-terminus: Threonine--tRNA ligase (635 aa).

One can recognise a TGS domain in the interval 1–61 (MITVRLPDGS…EQDSDLSIIT (61 aa)). Residues 242-533 (DHRKLGRALD…LIENHAGALP (292 aa)) are catalytic. Zn(2+) contacts are provided by Cys-333, His-384, and His-510.

The protein belongs to the class-II aminoacyl-tRNA synthetase family. Homodimer. Zn(2+) is required as a cofactor.

The protein resides in the cytoplasm. It carries out the reaction tRNA(Thr) + L-threonine + ATP = L-threonyl-tRNA(Thr) + AMP + diphosphate + H(+). In terms of biological role, catalyzes the attachment of threonine to tRNA(Thr) in a two-step reaction: L-threonine is first activated by ATP to form Thr-AMP and then transferred to the acceptor end of tRNA(Thr). Also edits incorrectly charged L-seryl-tRNA(Thr). The polypeptide is Threonine--tRNA ligase (Herminiimonas arsenicoxydans).